Reading from the N-terminus, the 215-residue chain is Adenylate kinase (215 aa).

10–15 (GAGKGT) is an ATP binding site. Residues 30–59 (STGDILRDAVSKGTELGKMAKAIMDRGELV) form an NMP region. AMP is bound by residues Thr-31, Arg-36, 57 to 59 (ELV), 82 to 85 (GYPR), and Gln-89. The segment at 123 to 160 (NRRVCPNCGKVYNLITLQPKEDEKCDVCGTKLIQRDDD) is LID. Arg-124 contributes to the ATP binding site. The Zn(2+) site is built by Cys-127 and Cys-130. 133–134 (VY) provides a ligand contact to ATP. Positions 147 and 150 each coordinate Zn(2+). Positions 157 and 168 each coordinate AMP. ATP is bound at residue Gln-196.

This sequence belongs to the adenylate kinase family. As to quaternary structure, monomer.

Its subcellular location is the cytoplasm. It catalyses the reaction AMP + ATP = 2 ADP. It functions in the pathway purine metabolism; AMP biosynthesis via salvage pathway; AMP from ADP: step 1/1. Its function is as follows. Catalyzes the reversible transfer of the terminal phosphate group between ATP and AMP. Plays an important role in cellular energy homeostasis and in adenine nucleotide metabolism. This chain is Adenylate kinase, found in Petrotoga mobilis (strain DSM 10674 / SJ95).